The following is a 164-amino-acid chain: Lipoprotein signal peptidase (164 aa).

3 consecutive transmembrane segments (helical) span residues 12–32 (WLWL…LILQ), 70–90 (WFFA…MYRS), and 102–122 (ALII…GFVV). Active-site residues include D123 and D141. Residues 137–157 (FNLADTAICVGAALIVLEGFL) form a helical membrane-spanning segment.

The protein belongs to the peptidase A8 family.

The protein localises to the cell inner membrane. It catalyses the reaction Release of signal peptides from bacterial membrane prolipoproteins. Hydrolyzes -Xaa-Yaa-Zaa-|-(S,diacylglyceryl)Cys-, in which Xaa is hydrophobic (preferably Leu), and Yaa (Ala or Ser) and Zaa (Gly or Ala) have small, neutral side chains.. It functions in the pathway protein modification; lipoprotein biosynthesis (signal peptide cleavage). Functionally, this protein specifically catalyzes the removal of signal peptides from prolipoproteins. The sequence is that of Lipoprotein signal peptidase from Shigella flexneri.